Reading from the N-terminus, the 1505-residue chain is Anaphase-promoting complex subunit 1 (1505 aa).

This sequence belongs to the APC1 family. In terms of assembly, the APC/C complex is probably composed of at least 12 subunits: apc-2, apc-10, apc-11, cdc-26, emb-1, emb-27, emb-30, mat-1, mat-2, mat-3, such-1 and gfi-3.

It participates in protein modification; protein ubiquitination. Probable component of the anaphase promoting complex/cyclosome (APC/C), a cell cycle-regulated E3 ubiquitin ligase that controls progression through mitosis and the G1 phase of the cell cycle. The APC/C complex acts by mediating ubiquitination and subsequent degradation of target proteins. Developmental role in early embryogenesis and the metaphase to anaphase transition in oocyte and spermatocyte meiosis and mitosis in germ cells. Required for embryonic anterior-posterior axis formation. Plays a role in regulating the abundance of glr-1 receptors in postmitotic neurons, which may in turn control animal locomotion. Involved in regulating GABA neurotransmitter release at neuromuscular junctions in GABA motor neurons. The protein is Anaphase-promoting complex subunit 1 of Caenorhabditis elegans.